A 98-amino-acid chain; its full sequence is UPF0251 protein Sbal_3699 (98 aa).

Belongs to the UPF0251 family.

The polypeptide is UPF0251 protein Sbal_3699 (Shewanella baltica (strain OS155 / ATCC BAA-1091)).